A 486-amino-acid chain; its full sequence is Ty transcription activator TEC1 (486 aa).

The residue at position 2 (serine 2) is an N-acetylserine. Positions 125-199 form a DNA-binding region, TEA; the sequence is WTIGCDKWSE…QVWKKTIQNK (75 aa). Phosphoserine is present on serine 325. Disordered stretches follow at residues 372–410 and 465–486; these read EHES…SRPV and HYEH…GNFY. The span at 377-388 shows a compositional bias: low complexity; it reads PEFSSNSNSGSE. Residues 472–486 are compositionally biased toward polar residues; sequence QRNFTPSNQSHGNFY.

Belongs to the TEC1 family.

It is found in the nucleus. In terms of biological role, TEC1 is involved in the activation of TY1 and TY1-mediated gene expression. It is not involved in mating or sporulation processes. The chain is Ty transcription activator TEC1 (TEC1) from Saccharomyces cerevisiae (strain ATCC 204508 / S288c) (Baker's yeast).